We begin with the raw amino-acid sequence, 540 residues long: Zona pellucida sperm-binding protein 4 (540 aa).

Residues M1–S18 form the signal peptide. Topologically, residues G19–K505 are extracellular. N-linked (GlcNAc...) asparagine glycosylation is present at N69. The 43-residue stretch at D141 to N183 folds into the P-type domain. In terms of domain architecture, ZP spans H188–R466. Residues N202, N219, and N267 are each glycosylated (N-linked (GlcNAc...) asparagine). An O-linked (GalNAc...) threonine glycan is attached at T302. A disulfide bond links C367 and C442. The propeptide at S463–Q540 is removed in mature form. Residues N470 and N474 are each glycosylated (N-linked (GlcNAc...) asparagine). The helical transmembrane segment at V506–L526 threads the bilayer. Topologically, residues A527–Q540 are cytoplasmic.

The protein belongs to the ZP domain family. ZPB subfamily. Post-translationally, proteolytically cleaved before the transmembrane segment to yield the secreted ectodomain incorporated in the zona pellucida. In terms of tissue distribution, expressed in oocytes.

Its subcellular location is the zona pellucida. The protein resides in the cell membrane. Functionally, component of the zona pellucida, an extracellular matrix surrounding oocytes which mediates sperm binding, induction of the acrosome reaction and prevents post-fertilization polyspermy. The zona pellucida is composed of 3 to 4 glycoproteins, ZP1, ZP2, ZP3, and ZP4. ZP4 may act as a sperm receptor. This Homo sapiens (Human) protein is Zona pellucida sperm-binding protein 4 (ZP4).